A 597-amino-acid polypeptide reads, in one-letter code: uncharacterized protein (597 aa).

The 151-residue stretch at 48 to 198 folds into the Helicase ATP-binding domain; it reads LHPYNPYSSL…DSILSLTKET (151 aa). ATP is bound at residue 61 to 68; the sequence is YDVGLGKT. The DEVH box signature appears at 146–149; the sequence is DEVH. In terms of domain architecture, Helicase C-terminal spans 275 to 467; that stretch reads KINAFINSIK…DIPKIDNEMV (193 aa).

Belongs to the helicase family.

In terms of biological role, the presence of the two linear plasmids, termed pGKL1 and pGKL2, in strains of Kluyveromyces lactis confers the killer phenotype to the host cell, by promoting the secretion of a toxin able to inhibit the growth of sensitive strains. This is an uncharacterized protein from Kluyveromyces lactis (strain ATCC 8585 / CBS 2359 / DSM 70799 / NBRC 1267 / NRRL Y-1140 / WM37) (Yeast).